The primary structure comprises 264 residues: Adenosylcobinamide-GDP ribazoletransferase (264 aa).

Helical transmembrane passes span 10-30 (LFFI…VGYT), 43-63 (LVGA…AQVW), 113-133 (LGSY…VALY), 141-161 (VQAL…PVAL), 183-203 (VSDA…AAAW), 205-225 (LGAS…LAAF), and 243-263 (GAAQ…GVWF).

It belongs to the CobS family. Mg(2+) is required as a cofactor.

It is found in the cell inner membrane. It catalyses the reaction alpha-ribazole + adenosylcob(III)inamide-GDP = adenosylcob(III)alamin + GMP + H(+). It carries out the reaction alpha-ribazole 5'-phosphate + adenosylcob(III)inamide-GDP = adenosylcob(III)alamin 5'-phosphate + GMP + H(+). The protein operates within cofactor biosynthesis; adenosylcobalamin biosynthesis; adenosylcobalamin from cob(II)yrinate a,c-diamide: step 7/7. In terms of biological role, joins adenosylcobinamide-GDP and alpha-ribazole to generate adenosylcobalamin (Ado-cobalamin). Also synthesizes adenosylcobalamin 5'-phosphate from adenosylcobinamide-GDP and alpha-ribazole 5'-phosphate. This is Adenosylcobinamide-GDP ribazoletransferase from Leptothrix cholodnii (strain ATCC 51168 / LMG 8142 / SP-6) (Leptothrix discophora (strain SP-6)).